Consider the following 219-residue polypeptide: Cytidylate kinase (219 aa).

10–18 (GPAAAGKST) is an ATP binding site.

The protein belongs to the cytidylate kinase family. Type 1 subfamily.

Its subcellular location is the cytoplasm. The catalysed reaction is CMP + ATP = CDP + ADP. It carries out the reaction dCMP + ATP = dCDP + ADP. The sequence is that of Cytidylate kinase from Staphylococcus aureus (strain bovine RF122 / ET3-1).